The following is a 250-amino-acid chain: Endonuclease NucS (250 aa).

This sequence belongs to the NucS endonuclease family.

Its subcellular location is the cytoplasm. Its function is as follows. Cleaves both 3' and 5' ssDNA extremities of branched DNA structures. In Sulfolobus acidocaldarius (strain ATCC 33909 / DSM 639 / JCM 8929 / NBRC 15157 / NCIMB 11770), this protein is Endonuclease NucS.